The sequence spans 109 residues: Phosphoribosyl-ATP pyrophosphatase (109 aa).

This sequence belongs to the PRA-PH family.

It localises to the cytoplasm. It catalyses the reaction 1-(5-phospho-beta-D-ribosyl)-ATP + H2O = 1-(5-phospho-beta-D-ribosyl)-5'-AMP + diphosphate + H(+). It participates in amino-acid biosynthesis; L-histidine biosynthesis; L-histidine from 5-phospho-alpha-D-ribose 1-diphosphate: step 2/9. This is Phosphoribosyl-ATP pyrophosphatase from Parvibaculum lavamentivorans (strain DS-1 / DSM 13023 / NCIMB 13966).